Here is a 36-residue protein sequence, read N- to C-terminus: uncharacterized protein (36 aa).

This is an uncharacterized protein from Archaeoglobus fulgidus (strain ATCC 49558 / DSM 4304 / JCM 9628 / NBRC 100126 / VC-16).